The primary structure comprises 126 residues: MRYGEKEIKEFDVENMEIWPNDAKNDYIIKITLPEFMCCCPRSGYPDFATIYLEYMPDKFVIELKAIKLYINTFMYRNVSHEASINEIYNTLKDKLKPKWIKVVGDFNPRGNVHTVIECRSDMVVP.

Residue C40 is the Thioimide intermediate of the active site. D47 serves as the catalytic Proton donor. Residues 62–64 (IEL) and 81–82 (HE) contribute to the substrate site.

The protein belongs to the GTP cyclohydrolase I family. QueF type 1 subfamily.

The protein localises to the cytoplasm. The enzyme catalyses 7-aminomethyl-7-carbaguanine + 2 NADP(+) = 7-cyano-7-deazaguanine + 2 NADPH + 3 H(+). Its pathway is tRNA modification; tRNA-queuosine biosynthesis. In terms of biological role, catalyzes the NADPH-dependent reduction of 7-cyano-7-deazaguanine (preQ0) to 7-aminomethyl-7-deazaguanine (preQ1). This is NADPH-dependent 7-cyano-7-deazaguanine reductase from Campylobacter jejuni subsp. doylei (strain ATCC BAA-1458 / RM4099 / 269.97).